We begin with the raw amino-acid sequence, 157 residues long: MEEKNKIYLTQETIKKYEEEKWHLINVERPAVILEIKEARQQGDLSENAEYDAAREKQGQIEDRITELENILSNAISIQESHSDKIGLGSVVRILNQSTGKERTFKIVGSFDTDPTQNKISYESPLAKSIIGFSKGDVVEIDAPDKYTTKILSVNDK.

Residues Glu47–Ala75 adopt a coiled-coil conformation.

It belongs to the GreA/GreB family.

Its function is as follows. Necessary for efficient RNA polymerase transcription elongation past template-encoded arresting sites. The arresting sites in DNA have the property of trapping a certain fraction of elongating RNA polymerases that pass through, resulting in locked ternary complexes. Cleavage of the nascent transcript by cleavage factors such as GreA or GreB allows the resumption of elongation from the new 3'terminus. GreA releases sequences of 2 to 3 nucleotides. This is Transcription elongation factor GreA from Mycoplasmopsis pulmonis (strain UAB CTIP) (Mycoplasma pulmonis).